Consider the following 354-residue polypeptide: Selection and upkeep of intraepithelial T-cells protein 1 (354 aa).

Positions 23 to 141 (PSSEQFTVNS…EEAIAEVKVT (119 aa)) constitute an Ig-like V-type 1 domain. 2 cysteine pairs are disulfide-bonded: Cys-49-Cys-123 and Cys-163-Cys-217. The 73-residue stretch at 161-233 (VECNSEGWFP…TGQEERTSIV (73 aa)) folds into the Ig-like C1-type 2 domain. 3 helical membrane-spanning segments follow: residues 243-263 (SVWI…IMMP), 283-303 (LIGI…TITL), and 326-346 (MTVM…LVYF).

Belongs to the SKINT family. In terms of tissue distribution, expressed in the thymus and skin.

It is found in the membrane. In terms of biological role, may act by engaging a cell surface molecule on immature T-cells in the embryonic thymus. This Macaca fascicularis (Crab-eating macaque) protein is Selection and upkeep of intraepithelial T-cells protein 1 (SKINT1).